Consider the following 506-residue polypeptide: ATP synthase subunit alpha (506 aa).

ATP is bound at residue 169–176 (GDRQTGKT).

Belongs to the ATPase alpha/beta chains family. As to quaternary structure, F-type ATPases have 2 components, CF(1) - the catalytic core - and CF(0) - the membrane proton channel. CF(1) has five subunits: alpha(3), beta(3), gamma(1), delta(1), epsilon(1). CF(0) has three main subunits: a(1), b(2) and c(9-12). The alpha and beta chains form an alternating ring which encloses part of the gamma chain. CF(1) is attached to CF(0) by a central stalk formed by the gamma and epsilon chains, while a peripheral stalk is formed by the delta and b chains.

The protein localises to the cell membrane. It carries out the reaction ATP + H2O + 4 H(+)(in) = ADP + phosphate + 5 H(+)(out). Produces ATP from ADP in the presence of a proton gradient across the membrane. The alpha chain is a regulatory subunit. In Acetivibrio thermocellus (strain ATCC 27405 / DSM 1237 / JCM 9322 / NBRC 103400 / NCIMB 10682 / NRRL B-4536 / VPI 7372) (Clostridium thermocellum), this protein is ATP synthase subunit alpha.